A 559-amino-acid chain; its full sequence is Formate--tetrahydrofolate ligase (559 aa).

Residue 68-75 (TPAGEGKT) coordinates ATP.

Belongs to the formate--tetrahydrofolate ligase family. Homotetramer.

It carries out the reaction (6S)-5,6,7,8-tetrahydrofolate + formate + ATP = (6R)-10-formyltetrahydrofolate + ADP + phosphate. The protein operates within one-carbon metabolism; tetrahydrofolate interconversion. In Moorella thermoacetica (Clostridium thermoaceticum), this protein is Formate--tetrahydrofolate ligase.